A 644-amino-acid chain; its full sequence is Macrolide export ATP-binding/permease protein MacB (644 aa).

The region spanning 4–242 (IECKNINRYF…SNVGRIQEKA (239 aa)) is the ABC transporter domain. ATP is bound at residue 40 to 47 (GQSGSGKS). Transmembrane regions (helical) follow at residues 270–290 (LLTM…VALG), 524–544 (IALI…LVSV), 574–594 (LICV…SLVF), and 607–627 (AMSV…FGFM).

The protein belongs to the ABC transporter superfamily. Macrolide exporter (TC 3.A.1.122) family. In terms of assembly, homodimer.

It localises to the cell inner membrane. Non-canonical ABC transporter that contains transmembrane domains (TMD), which form a pore in the inner membrane, and an ATP-binding domain (NBD), which is responsible for energy generation. Confers resistance against macrolides. The protein is Macrolide export ATP-binding/permease protein MacB of Neisseria meningitidis serogroup A / serotype 4A (strain DSM 15465 / Z2491).